Reading from the N-terminus, the 608-residue chain is Chaperone protein HtpG (608 aa).

An a; substrate-binding region spans residues 1–332; that stretch reads MQFQTEVNQL…VEDLPLNVSR (332 aa). The tract at residues 333 to 536 is b; that stretch reads EILQENQILK…KNKPDFAMQQ (204 aa). Positions 537–608 are c; the sequence is LLKQMGQEQN…LTKIINKAFS (72 aa).

This sequence belongs to the heat shock protein 90 family. Homodimer.

The protein resides in the cytoplasm. Molecular chaperone. Has ATPase activity. The protein is Chaperone protein HtpG of Campylobacter jejuni (strain RM1221).